The following is a 488-amino-acid chain: Integrin beta-like protein 1 (488 aa).

A signal peptide spans 1–21 (MHAGAFINFVWALSLVSLLAA). Intrachain disulfides connect Cys38–Cys65, Cys49–Cys63, Cys57–Cys68, Cys70–Cys83, Cys85–Cys106, Cys90–Cys104, Cys98–Cys109, Cys111–Cys120, Cys126–Cys153, Cys137–Cys151, Cys145–Cys156, Cys158–Cys172, Cys174–Cys196, Cys179–Cys194, Cys188–Cys199, Cys201–Cys210, Cys214–Cys241, Cys225–Cys239, Cys233–Cys244, Cys246–Cys263, Cys265–Cys290, Cys270–Cys288, Cys282–Cys293, Cys295–Cys304, Cys310–Cys337, Cys321–Cys335, Cys329–Cys340, Cys342–Cys355, Cys357–Cys378, Cys362–Cys376, Cys370–Cys381, Cys383–Cys392, Cys398–Cys425, Cys409–Cys423, Cys417–Cys428, Cys430–Cys442, Cys444–Cys465, Cys449–Cys463, Cys457–Cys468, and Cys470–Cys479. I-EGF domains follow at residues 38-84 (CRLP…PLCE), 85-121 (CHDW…EACQ), 126-173 (CDLT…KYCE), 174-211 (CDDT…DKCE), 214-264 (CDIT…DTCE), 265-305 (CDER…RKCE), 310-356 (CALS…KNCE), 357-393 (CDDR…KLCQ), 398-443 (CNMT…EFCE), and 444-480 (CDDR…NACE). The stretch at 49 to 89 (CRTPDGSICSGRGSCDCGICLCEVKEAGKYYGPLCECHDWV) is one I repeat. The segment at 49-488 (CRTPDGSICS…CEIWLGSEYP (440 aa)) is cysteine-rich tandem repeats. One copy of the II repeat lies at 90 to 136 (CHTYDGQVCAGHGQCDCGVCKCDVGWSGEACQYPTTCDLTRKKSNEM). An III repeat occupies 137–178 (CKNSQAVICSNAGTCQCGRCKCENSDNSGLIYGKYCECDDTE). The IV repeat unit spans residues 179–224 (CFDDETQEICGGHGKCYCGNCYCEAGWHGDKCEFQCDITPWEIKKR). Residues 225-269 (CTSPDGKICSNRGTCVCGECTCHDVDPTGDWGDIHGDTCECDERN) form a V repeat. One copy of the VI repeat lies at 270 to 320 (CKSVYDRYSDDFCSGHGQCNCGRCDCKDGWTGRKCEHPRACALSIEESKKK). Residues 321 to 361 (CQGSASQPCSGRGKCECGQCTCFPPGDSKVYGKNCECDDRQ) form a VII repeat. The VIII repeat unit spans residues 362–408 (CEDLEGKICGEHGTCSCGRCICEAGWFGKLCQHERKCNMTEEESKSQ). N-linked (GlcNAc...) asparagine glycosylation occurs at Asn399. The stretch at 409–448 (CESDDGILCSGKGSCHCGKCICSPQEWYVSGEFCECDDRD) is one IX repeat. The stretch at 449-488 (CDKHDGLICTGNGICNCGNCECWEGWNGNACEIWLGSEYP) is one X repeat.

The protein localises to the secreted. The protein is Integrin beta-like protein 1 (itgbl1) of Xenopus laevis (African clawed frog).